We begin with the raw amino-acid sequence, 448 residues long: Methylenetetrahydrofolate--tRNA-(uracil-5-)-methyltransferase TrmFO (448 aa).

Residue Gly-13–Gly-18 coordinates FAD.

The protein belongs to the MnmG family. TrmFO subfamily. Requires FAD as cofactor.

The protein resides in the cytoplasm. The catalysed reaction is uridine(54) in tRNA + (6R)-5,10-methylene-5,6,7,8-tetrahydrofolate + NADH + H(+) = 5-methyluridine(54) in tRNA + (6S)-5,6,7,8-tetrahydrofolate + NAD(+). It carries out the reaction uridine(54) in tRNA + (6R)-5,10-methylene-5,6,7,8-tetrahydrofolate + NADPH + H(+) = 5-methyluridine(54) in tRNA + (6S)-5,6,7,8-tetrahydrofolate + NADP(+). In terms of biological role, catalyzes the folate-dependent formation of 5-methyl-uridine at position 54 (M-5-U54) in all tRNAs. In Streptococcus pyogenes serotype M2 (strain MGAS10270), this protein is Methylenetetrahydrofolate--tRNA-(uracil-5-)-methyltransferase TrmFO.